A 338-amino-acid chain; its full sequence is Ferredoxin--NADP reductase (338 aa).

Residues D38, Q46, Y51, V91, F125, D291, and T331 each coordinate FAD.

It belongs to the ferredoxin--NADP reductase type 2 family. In terms of assembly, homodimer. Requires FAD as cofactor.

It catalyses the reaction 2 reduced [2Fe-2S]-[ferredoxin] + NADP(+) + H(+) = 2 oxidized [2Fe-2S]-[ferredoxin] + NADPH. The polypeptide is Ferredoxin--NADP reductase (Orientia tsutsugamushi (strain Ikeda) (Rickettsia tsutsugamushi)).